A 390-amino-acid chain; its full sequence is uncharacterized protein (390 aa).

The next 2 membrane-spanning stretches (helical) occupy residues 27–47 (GGLI…MEWI) and 356–376 (FGGF…LASF).

Belongs to the ERGIC family.

It is found in the membrane. This is an uncharacterized protein from Schizosaccharomyces pombe (strain 972 / ATCC 24843) (Fission yeast).